Consider the following 156-residue polypeptide: Ribosomal RNA large subunit methyltransferase H (156 aa).

S-adenosyl-L-methionine contacts are provided by Leu72 and Gly104.

Belongs to the RNA methyltransferase RlmH family. In terms of assembly, homodimer.

The protein localises to the cytoplasm. The enzyme catalyses pseudouridine(1915) in 23S rRNA + S-adenosyl-L-methionine = N(3)-methylpseudouridine(1915) in 23S rRNA + S-adenosyl-L-homocysteine + H(+). Specifically methylates the pseudouridine at position 1915 (m3Psi1915) in 23S rRNA. In Maricaulis maris (strain MCS10) (Caulobacter maris), this protein is Ribosomal RNA large subunit methyltransferase H.